The following is a 782-amino-acid chain: Coiled-coil alpha-helical rod protein 1 (782 aa).

Composition is skewed to basic and acidic residues over residues 62 to 74 (ERDV…EPGR) and 208 to 218 (ETRRAGEAKEL). 2 disordered regions span residues 62-82 (ERDV…WGLE) and 182-218 (LTQA…AKEL). 3 coiled-coil regions span residues 82–314 (EGSQ…ELTR), 344–437 (LMVQ…NAVS), and 498–691 (VADV…QQEG).

The protein resides in the cytoplasm. It is found in the nucleus. May be a regulator of keratinocyte proliferation or differentiation. The sequence is that of Coiled-coil alpha-helical rod protein 1 (CCHCR1) from Pan paniscus (Pygmy chimpanzee).